A 260-amino-acid chain; its full sequence is Small ribosomal subunit protein uS2 (260 aa).

The interval 224–260 (GRQGQDAGEDSAEKTFADTADGEGDFEESSNNENQEA) is disordered. Positions 243–260 (ADGEGDFEESSNNENQEA) are enriched in acidic residues.

This sequence belongs to the universal ribosomal protein uS2 family.

The sequence is that of Small ribosomal subunit protein uS2 from Oenococcus oeni (strain ATCC BAA-331 / PSU-1).